Consider the following 245-residue polypeptide: 1-(5-phosphoribosyl)-5-[(5-phosphoribosylamino)methylideneamino] imidazole-4-carboxamide isomerase (245 aa).

Aspartate 7 functions as the Proton acceptor in the catalytic mechanism. Aspartate 129 functions as the Proton donor in the catalytic mechanism.

Belongs to the HisA/HisF family.

It is found in the cytoplasm. The enzyme catalyses 1-(5-phospho-beta-D-ribosyl)-5-[(5-phospho-beta-D-ribosylamino)methylideneamino]imidazole-4-carboxamide = 5-[(5-phospho-1-deoxy-D-ribulos-1-ylimino)methylamino]-1-(5-phospho-beta-D-ribosyl)imidazole-4-carboxamide. It participates in amino-acid biosynthesis; L-histidine biosynthesis; L-histidine from 5-phospho-alpha-D-ribose 1-diphosphate: step 4/9. The polypeptide is 1-(5-phosphoribosyl)-5-[(5-phosphoribosylamino)methylideneamino] imidazole-4-carboxamide isomerase (Yersinia pestis bv. Antiqua (strain Antiqua)).